The following is a 421-amino-acid chain: UDP-N-acetylglucosamine 1-carboxyvinyltransferase (421 aa).

Residue 22–23 (KN) coordinates phosphoenolpyruvate. Residue arginine 93 participates in UDP-N-acetyl-alpha-D-glucosamine binding. Cysteine 117 (proton donor) is an active-site residue. The residue at position 117 (cysteine 117) is a 2-(S-cysteinyl)pyruvic acid O-phosphothioketal. Residues 122 to 126 (RPVDL), aspartate 308, and valine 330 contribute to the UDP-N-acetyl-alpha-D-glucosamine site.

It belongs to the EPSP synthase family. MurA subfamily.

The protein resides in the cytoplasm. The catalysed reaction is phosphoenolpyruvate + UDP-N-acetyl-alpha-D-glucosamine = UDP-N-acetyl-3-O-(1-carboxyvinyl)-alpha-D-glucosamine + phosphate. It participates in cell wall biogenesis; peptidoglycan biosynthesis. Its function is as follows. Cell wall formation. Adds enolpyruvyl to UDP-N-acetylglucosamine. The chain is UDP-N-acetylglucosamine 1-carboxyvinyltransferase from Ectopseudomonas mendocina (strain ymp) (Pseudomonas mendocina).